Reading from the N-terminus, the 393-residue chain is Acetate kinase (393 aa).

A Mg(2+)-binding site is contributed by Asn6. Lys13 contributes to the ATP binding site. Position 87 (Arg87) interacts with substrate. Residue Asp143 is the Proton donor/acceptor of the active site. ATP-binding positions include 203-207 (HLGNG), 278-280 (DMR), and 326-330 (GIGEN). Position 380 (Glu380) interacts with Mg(2+).

It belongs to the acetokinase family. In terms of assembly, homodimer. It depends on Mg(2+) as a cofactor. Mn(2+) serves as cofactor.

Its subcellular location is the cytoplasm. It catalyses the reaction acetate + ATP = acetyl phosphate + ADP. It functions in the pathway metabolic intermediate biosynthesis; acetyl-CoA biosynthesis; acetyl-CoA from acetate: step 1/2. Its function is as follows. Catalyzes the formation of acetyl phosphate from acetate and ATP. Can also catalyze the reverse reaction. This chain is Acetate kinase, found in Mycoplasma capricolum subsp. capricolum (strain California kid / ATCC 27343 / NCTC 10154).